The primary structure comprises 54 residues: Large ribosomal subunit protein bL33 (54 aa).

It belongs to the bacterial ribosomal protein bL33 family.

This chain is Large ribosomal subunit protein bL33, found in Stenotrophomonas maltophilia (strain R551-3).